The sequence spans 727 residues: Polyphosphate kinase (727 aa).

Residue Asn82 participates in ATP binding. Residues Arg412 and Arg442 each coordinate Mg(2+). His472 acts as the Phosphohistidine intermediate in catalysis. ATP contacts are provided by Tyr505, Arg601, and His629.

It belongs to the polyphosphate kinase 1 (PPK1) family. Requires Mg(2+) as cofactor. Post-translationally, an intermediate of this reaction is the autophosphorylated ppk in which a phosphate is covalently linked to a histidine residue through a N-P bond.

The enzyme catalyses [phosphate](n) + ATP = [phosphate](n+1) + ADP. Catalyzes the reversible transfer of the terminal phosphate of ATP to form a long-chain polyphosphate (polyP). In Pseudomonas putida (strain ATCC 47054 / DSM 6125 / CFBP 8728 / NCIMB 11950 / KT2440), this protein is Polyphosphate kinase.